A 1081-amino-acid polypeptide reads, in one-letter code: Carbamoyl phosphate synthase large chain (1081 aa).

The tract at residues 1 to 403 is carboxyphosphate synthetic domain; the sequence is MPRRNDLNKI…SFQKALRSLE (403 aa). Residues Arg-129, Arg-170, Gly-177, Lys-209, Leu-211, Glu-216, Gly-242, Val-243, His-244, Gln-286, and Glu-300 each contribute to the ATP site. The ATP-grasp 1 domain maps to 133 to 329; it reads KEAMARIGVP…IAKFAAKLAV (197 aa). Gln-286, Glu-300, and Asn-302 together coordinate Mg(2+). Residues Gln-286, Glu-300, and Asn-302 each contribute to the Mn(2+) site. Positions 404 to 553 are oligomerization domain; sequence TGRFGFGCDR…STYEPEECEV (150 aa). The tract at residues 554–944 is carbamoyl phosphate synthetic domain; sequence LPSDKPKVMI…AFAKAELGAG (391 aa). An ATP-grasp 2 domain is found at 686–878; that stretch reads EKILHELEIS…LAKIASLVMS (193 aa). ATP is bound by residues Arg-722, Lys-761, Leu-763, Glu-768, Gly-794, Ile-795, His-796, Ser-797, Gln-837, and Glu-849. Mg(2+) is bound by residues Gln-837, Glu-849, and Asn-851. Gln-837, Glu-849, and Asn-851 together coordinate Mn(2+). One can recognise an MGS-like domain in the interval 945–1081; sequence VILATTGTVF…DVKALQDYLG (137 aa). Residues 945–1081 form an allosteric domain region; that stretch reads VILATTGTVF…DVKALQDYLG (137 aa).

This sequence belongs to the CarB family. As to quaternary structure, composed of two chains; the small (or glutamine) chain promotes the hydrolysis of glutamine to ammonia, which is used by the large (or ammonia) chain to synthesize carbamoyl phosphate. Tetramer of heterodimers (alpha,beta)4. Mg(2+) serves as cofactor. It depends on Mn(2+) as a cofactor.

The enzyme catalyses hydrogencarbonate + L-glutamine + 2 ATP + H2O = carbamoyl phosphate + L-glutamate + 2 ADP + phosphate + 2 H(+). The catalysed reaction is hydrogencarbonate + NH4(+) + 2 ATP = carbamoyl phosphate + 2 ADP + phosphate + 2 H(+). It functions in the pathway amino-acid biosynthesis; L-arginine biosynthesis; carbamoyl phosphate from bicarbonate: step 1/1. The protein operates within pyrimidine metabolism; UMP biosynthesis via de novo pathway; (S)-dihydroorotate from bicarbonate: step 1/3. Its function is as follows. Large subunit of the glutamine-dependent carbamoyl phosphate synthetase (CPSase). CPSase catalyzes the formation of carbamoyl phosphate from the ammonia moiety of glutamine, carbonate, and phosphate donated by ATP, constituting the first step of 2 biosynthetic pathways, one leading to arginine and/or urea and the other to pyrimidine nucleotides. The large subunit (synthetase) binds the substrates ammonia (free or transferred from glutamine from the small subunit), hydrogencarbonate and ATP and carries out an ATP-coupled ligase reaction, activating hydrogencarbonate by forming carboxy phosphate which reacts with ammonia to form carbamoyl phosphate. The sequence is that of Carbamoyl phosphate synthase large chain from Synechocystis sp. (strain ATCC 27184 / PCC 6803 / Kazusa).